A 103-amino-acid chain; its full sequence is Histone H4.2 (103 aa).

The segment covering 1 to 14 (MSGRGKGGKGLGKG) has biased composition (gly residues). Positions 1–20 (MSGRGKGGKGLGKGGAKRHR) are disordered. Lys6 is modified (N6-acetyl-N6-methyllysine; alternate). 3 positions are modified to N6-methyllysine; alternate: Lys6, Lys9, and Lys13. Lys13 carries the post-translational modification N6-acetyl-N6-methyllysine; alternate. Residues 17–21 (KRHRK) mediate DNA binding. Lys92 bears the N6-glutaryllysine mark.

The protein belongs to the histone H4 family. The nucleosome is a histone octamer containing two molecules each of H2A, H2B, H3 and H4 assembled in one H3-H4 heterotetramer and two H2A-H2B heterodimers. The octamer wraps approximately 147 bp of DNA. Glutarylation at Lys-92 (H4K91glu) destabilizes nucleosomes by promoting dissociation of the H2A-H2B dimers from nucleosomes.

The protein resides in the nucleus. It localises to the chromosome. In terms of biological role, core component of nucleosome. Nucleosomes wrap and compact DNA into chromatin, limiting DNA accessibility to the cellular machineries which require DNA as a template. Histones thereby play a central role in transcription regulation, DNA repair, DNA replication and chromosomal stability. DNA accessibility is regulated via a complex set of post-translational modifications of histones, also called histone code, and nucleosome remodeling. The protein is Histone H4.2 (hhfB) of Emericella nidulans (strain FGSC A4 / ATCC 38163 / CBS 112.46 / NRRL 194 / M139) (Aspergillus nidulans).